A 290-amino-acid polypeptide reads, in one-letter code: Glutamate racemase (290 aa).

Residues 24–25 and 56–57 each bind substrate; these read DS and YG. Residue Cys87 is the Proton donor/acceptor of the active site. Residue 88 to 89 coordinates substrate; it reads NT. The active-site Proton donor/acceptor is the Cys199. 200-201 lines the substrate pocket; that stretch reads TH. Positions 271–290 are disordered; it reads GADGASLPDPPSPRIELTTT.

The protein belongs to the aspartate/glutamate racemases family.

The enzyme catalyses L-glutamate = D-glutamate. The protein operates within cell wall biogenesis; peptidoglycan biosynthesis. Functionally, provides the (R)-glutamate required for cell wall biosynthesis. The chain is Glutamate racemase from Deinococcus radiodurans (strain ATCC 13939 / DSM 20539 / JCM 16871 / CCUG 27074 / LMG 4051 / NBRC 15346 / NCIMB 9279 / VKM B-1422 / R1).